A 530-amino-acid polypeptide reads, in one-letter code: uncharacterized protein (530 aa).

This is an uncharacterized protein from Leptospira interrogans serogroup Icterohaemorrhagiae serovar Lai (strain 56601).